The following is a 595-amino-acid chain: Putative terpenoid synthase 16 (595 aa).

Asp-349, Asp-353, Asn-494, and Asp-502 together coordinate Mg(2+). The DDXXD motif signature appears at 349 to 353 (DDTCD).

Belongs to the terpene synthase family. Tpsa subfamily. It depends on Mg(2+) as a cofactor. The cofactor is Mn(2+).

It is found in the cytoplasm. It functions in the pathway secondary metabolite biosynthesis; terpenoid biosynthesis. This is Putative terpenoid synthase 16 (TPS16) from Arabidopsis thaliana (Mouse-ear cress).